The chain runs to 209 residues: LexA repressor (209 aa).

Positions 28–48 (RAEIAKELGFRSANAAEEHLK) form a DNA-binding region, H-T-H motif. Residues S126 and K163 each act as for autocatalytic cleavage activity in the active site.

This sequence belongs to the peptidase S24 family. As to quaternary structure, homodimer.

The catalysed reaction is Hydrolysis of Ala-|-Gly bond in repressor LexA.. Functionally, represses a number of genes involved in the response to DNA damage (SOS response), including recA and lexA. In the presence of single-stranded DNA, RecA interacts with LexA causing an autocatalytic cleavage which disrupts the DNA-binding part of LexA, leading to derepression of the SOS regulon and eventually DNA repair. The sequence is that of LexA repressor from Vibrio cholerae serotype O1 (strain ATCC 39541 / Classical Ogawa 395 / O395).